The following is a 131-amino-acid chain: Ribonuclease VapC13 (131 aa).

Residues 2–128 (ILVDSNIPMY…RGFDSYPGIK (127 aa)) enclose the PINc domain. 2 residues coordinate Mg(2+): Asp5 and Asp99.

The protein belongs to the PINc/VapC protein family. Mg(2+) serves as cofactor.

Its subcellular location is the secreted. Functionally, toxic component of a type II toxin-antitoxin (TA) system. An RNase. The cognate antitoxin is VapB13. This Mycobacterium tuberculosis (strain ATCC 25618 / H37Rv) protein is Ribonuclease VapC13.